Reading from the N-terminus, the 208-residue chain is 3-isopropylmalate dehydratase small subunit 2 (208 aa).

Belongs to the LeuD family. LeuD type 1 subfamily. In terms of assembly, heterodimer of LeuC and LeuD.

The catalysed reaction is (2R,3S)-3-isopropylmalate = (2S)-2-isopropylmalate. The protein operates within amino-acid biosynthesis; L-leucine biosynthesis; L-leucine from 3-methyl-2-oxobutanoate: step 2/4. Its function is as follows. Catalyzes the isomerization between 2-isopropylmalate and 3-isopropylmalate, via the formation of 2-isopropylmaleate. This Salmonella choleraesuis (strain SC-B67) protein is 3-isopropylmalate dehydratase small subunit 2.